The sequence spans 97 residues: Aspartyl/glutamyl-tRNA(Asn/Gln) amidotransferase subunit C (97 aa).

Belongs to the GatC family. As to quaternary structure, heterotrimer of A, B and C subunits.

The enzyme catalyses L-glutamyl-tRNA(Gln) + L-glutamine + ATP + H2O = L-glutaminyl-tRNA(Gln) + L-glutamate + ADP + phosphate + H(+). It carries out the reaction L-aspartyl-tRNA(Asn) + L-glutamine + ATP + H2O = L-asparaginyl-tRNA(Asn) + L-glutamate + ADP + phosphate + 2 H(+). Allows the formation of correctly charged Asn-tRNA(Asn) or Gln-tRNA(Gln) through the transamidation of misacylated Asp-tRNA(Asn) or Glu-tRNA(Gln) in organisms which lack either or both of asparaginyl-tRNA or glutaminyl-tRNA synthetases. The reaction takes place in the presence of glutamine and ATP through an activated phospho-Asp-tRNA(Asn) or phospho-Glu-tRNA(Gln). The protein is Aspartyl/glutamyl-tRNA(Asn/Gln) amidotransferase subunit C of Listeria innocua serovar 6a (strain ATCC BAA-680 / CLIP 11262).